The chain runs to 733 residues: uncharacterized protein (733 aa).

A helical membrane pass occupies residues 174–194 (WAVMILASLRPELFGPIIIAG).

The protein localises to the membrane. This is an uncharacterized protein from Rhizobium meliloti (Ensifer meliloti).